The primary structure comprises 101 residues: MGEIAVGLNKGHQVTKKAGTPRPSRRKGFLSQRVKKVRAVVREVAGWAPYERRVMELLKVGKDKRALKMCKRKLGTHMRGKKKREEMAGVLRKMQAASKGE.

2 disordered regions span residues 1–31 (MGEI…GFLS) and 75–101 (GTHM…SKGE).

The protein belongs to the eukaryotic ribosomal protein eL36 family.

The protein is Large ribosomal subunit protein eL36 (RL36) of Ulva compressa (Green alga).